The following is a 210-amino-acid chain: Putative protein-lysine deacylase ABHD14B (210 aa).

At Ala-2 the chain carries N-acetylalanine. Ser-91 is modified (phosphoserine). Catalysis depends on charge relay system residues Ser-111, Asp-162, and His-188.

It belongs to the AB hydrolase superfamily. ABHD14 family. In terms of assembly, may interact with TAF1.

It is found in the cytoplasm. Its subcellular location is the nucleus. It carries out the reaction L-lysyl-[protein] + acetyl-CoA = N(6)-acetyl-L-lysyl-[protein] + CoA + H(+). Functionally, acts as an atypical protein-lysine deacetylase in vitro. Catalyzes the deacetylation of lysine residues using CoA as substrate, generating acetyl-CoA and the free amine of protein-lysine residues. Additional experiments are however required to confirm the protein-lysine deacetylase activity in vivo. Has hydrolase activity towards various surrogate p-nitrophenyl (pNp) substrates, such as pNp-butyrate, pNp-acetate and pNp-octanoate in vitro, with a strong preference for pNp-acetate. May activate transcription. The polypeptide is Putative protein-lysine deacylase ABHD14B (Pongo abelii (Sumatran orangutan)).